The chain runs to 406 residues: Phosphopentomutase (406 aa).

Residues aspartate 10, aspartate 305, histidine 310, aspartate 346, histidine 347, and histidine 358 each contribute to the Mn(2+) site.

It belongs to the phosphopentomutase family. Mn(2+) serves as cofactor.

The protein resides in the cytoplasm. It catalyses the reaction 2-deoxy-alpha-D-ribose 1-phosphate = 2-deoxy-D-ribose 5-phosphate. The catalysed reaction is alpha-D-ribose 1-phosphate = D-ribose 5-phosphate. The protein operates within carbohydrate degradation; 2-deoxy-D-ribose 1-phosphate degradation; D-glyceraldehyde 3-phosphate and acetaldehyde from 2-deoxy-alpha-D-ribose 1-phosphate: step 1/2. Its function is as follows. Isomerase that catalyzes the conversion of deoxy-ribose 1-phosphate (dRib-1-P) and ribose 1-phosphate (Rib-1-P) to deoxy-ribose 5-phosphate (dRib-5-P) and ribose 5-phosphate (Rib-5-P), respectively. In Rhizobium johnstonii (strain DSM 114642 / LMG 32736 / 3841) (Rhizobium leguminosarum bv. viciae), this protein is Phosphopentomutase.